A 170-amino-acid chain; its full sequence is 6,7-dimethyl-8-ribityllumazine synthase (170 aa).

5-amino-6-(D-ribitylamino)uracil contacts are provided by residues W25, A57–E59, and A79–I81. D84 to T85 serves as a coordination point for (2S)-2-hydroxy-3-oxobutyl phosphate. The active-site Proton donor is the H87. N112 contacts 5-amino-6-(D-ribitylamino)uracil. R126 is a (2S)-2-hydroxy-3-oxobutyl phosphate binding site.

The protein belongs to the DMRL synthase family.

It catalyses the reaction (2S)-2-hydroxy-3-oxobutyl phosphate + 5-amino-6-(D-ribitylamino)uracil = 6,7-dimethyl-8-(1-D-ribityl)lumazine + phosphate + 2 H2O + H(+). It functions in the pathway cofactor biosynthesis; riboflavin biosynthesis; riboflavin from 2-hydroxy-3-oxobutyl phosphate and 5-amino-6-(D-ribitylamino)uracil: step 1/2. Catalyzes the formation of 6,7-dimethyl-8-ribityllumazine by condensation of 5-amino-6-(D-ribitylamino)uracil with 3,4-dihydroxy-2-butanone 4-phosphate. This is the penultimate step in the biosynthesis of riboflavin. This is 6,7-dimethyl-8-ribityllumazine synthase from Thermobifida fusca (strain YX).